Here is an 80-residue protein sequence, read N- to C-terminus: Protein YibX (80 aa).

This chain is Protein YibX, found in Escherichia coli (strain K12).